The primary structure comprises 418 residues: Serine proteinase inhibitor 2.4 (418 aa).

The signal sequence occupies residues 1-28; that stretch reads MAFIAALGIFMAGICPAVLCFPNGTLGR. Residues Asn-23, Asn-38, Asn-104, and Asn-269 are each glycosylated (N-linked (GlcNAc...) asparagine).

Belongs to the serpin family.

The protein resides in the secreted. This chain is Serine proteinase inhibitor 2.4, found in Apodemus sylvaticus (European woodmouse).